A 219-amino-acid chain; its full sequence is Ribose-5-phosphate isomerase A (219 aa).

Substrate contacts are provided by residues Thr-28–Thr-31, Asp-81–Asp-84, and Lys-94–Gly-97. Catalysis depends on Glu-103, which acts as the Proton acceptor. Residue Lys-121 participates in substrate binding.

This sequence belongs to the ribose 5-phosphate isomerase family. As to quaternary structure, homodimer.

It catalyses the reaction aldehydo-D-ribose 5-phosphate = D-ribulose 5-phosphate. It functions in the pathway carbohydrate degradation; pentose phosphate pathway; D-ribose 5-phosphate from D-ribulose 5-phosphate (non-oxidative stage): step 1/1. In terms of biological role, catalyzes the reversible conversion of ribose-5-phosphate to ribulose 5-phosphate. The sequence is that of Ribose-5-phosphate isomerase A from Buchnera aphidicola subsp. Schizaphis graminum (strain Sg).